The sequence spans 269 residues: Type II methyltransferase M2.LlaDCHI (269 aa).

The protein belongs to the N(4)/N(6)-methyltransferase family.

It carries out the reaction a 2'-deoxyadenosine in DNA + S-adenosyl-L-methionine = an N(6)-methyl-2'-deoxyadenosine in DNA + S-adenosyl-L-homocysteine + H(+). In terms of biological role, a beta subtype methylase, recognizes the double-stranded sequence 5'-GATC-3', methylates A-2 on both strands, and protects the DNA from cleavage by the LlaDCHI endonuclease. The sequence is that of Type II methyltransferase M2.LlaDCHI from Lactococcus lactis subsp. cremoris (Streptococcus cremoris).